The chain runs to 234 residues: N-acetyl-alpha-D-glucosaminyl L-malate deacetylase 1 (234 aa).

3 residues coordinate Zn(2+): histidine 12, aspartate 15, and histidine 113.

The protein belongs to the PIGL family. The cofactor is Zn(2+).

It catalyses the reaction (S)-malyl N-acetyl-alpha-D-glucosaminide + H2O = (S)-malyl alpha-D-glucosaminide + acetate. Inhibited by BSH. Its function is as follows. Involved in bacillithiol (BSH) biosynthesis. Catalyzes the second step of the pathway, the deacetylation of N-acetylglucosaminylmalate (GlcNAc-Mal) to glucosamine malate (GlcN-Mal). This Bacillus anthracis protein is N-acetyl-alpha-D-glucosaminyl L-malate deacetylase 1.